Here is a 151-residue protein sequence, read N- to C-terminus: Probable cGMP 3',5'-cyclic phosphodiesterase subunit delta (151 aa).

The protein belongs to the PDE6D/unc-119 family. In terms of assembly, interacts with Pde6.

The protein localises to the nucleus. Its subcellular location is the cytoplasm. This is Probable cGMP 3',5'-cyclic phosphodiesterase subunit delta from Drosophila sechellia (Fruit fly).